The following is a 365-amino-acid chain: Putative DNA-directed RNA polymerase subunit alpha-like 3 (365 aa).

The protein belongs to the RNA polymerase alpha chain family. As to quaternary structure, in plastids the minimal PEP RNA polymerase catalytic core is composed of four subunits: alpha, beta, beta', and beta''. When a (nuclear-encoded) sigma factor is associated with the core the holoenzyme is formed, which can initiate transcription.

Its subcellular location is the plastid. The protein resides in the chloroplast. The enzyme catalyses RNA(n) + a ribonucleoside 5'-triphosphate = RNA(n+1) + diphosphate. DNA-dependent RNA polymerase catalyzes the transcription of DNA into RNA using the four ribonucleoside triphosphates as substrates. This chain is Putative DNA-directed RNA polymerase subunit alpha-like 3 (rpoAL3-A), found in Pelargonium hortorum (Common geranium).